The sequence spans 796 residues: Protein translocase subunit SecA 2 (796 aa).

Residues Q84, 102–106, and D496 contribute to the ATP site; that span reads GEGKT.

Belongs to the SecA family. As to quaternary structure, monomer and homodimer. Part of the essential Sec protein translocation apparatus which comprises SecA, SecYEG and auxiliary proteins SecDF. Other proteins may also be involved.

Its subcellular location is the cell membrane. It localises to the cytoplasm. The catalysed reaction is ATP + H2O + cellular proteinSide 1 = ADP + phosphate + cellular proteinSide 2.. Part of the Sec protein translocase complex. Interacts with the SecYEG preprotein conducting channel. Has a central role in coupling the hydrolysis of ATP to the transfer of proteins into and across the cell membrane, serving as an ATP-driven molecular motor driving the stepwise translocation of polypeptide chains across the membrane. This Staphylococcus aureus (strain MSSA476) protein is Protein translocase subunit SecA 2.